The chain runs to 994 residues: Phosphoenolpyruvate carboxylase (994 aa).

The interval 1-66 (MKSSGSARAT…QGRTREDKDR (66 aa)) is disordered. Composition is skewed to low complexity over residues 14–25 (AVSSSSAPAHAE) and 41–54 (AAARPLAPTNAASA). Catalysis depends on residues H204 and K646.

It belongs to the PEPCase type 1 family. Mg(2+) is required as a cofactor.

It catalyses the reaction oxaloacetate + phosphate = phosphoenolpyruvate + hydrogencarbonate. Its function is as follows. Forms oxaloacetate, a four-carbon dicarboxylic acid source for the tricarboxylic acid cycle. This chain is Phosphoenolpyruvate carboxylase, found in Burkholderia pseudomallei (strain 668).